Consider the following 426-residue polypeptide: Serine hydroxymethyltransferase (426 aa).

(6S)-5,6,7,8-tetrahydrofolate contacts are provided by residues Leu113 and Gly117–Leu119. N6-(pyridoxal phosphate)lysine is present on Lys222. Ser363–Phe365 lines the (6S)-5,6,7,8-tetrahydrofolate pocket.

The protein belongs to the SHMT family. In terms of assembly, homodimer. Pyridoxal 5'-phosphate is required as a cofactor.

The protein localises to the cytoplasm. The catalysed reaction is (6R)-5,10-methylene-5,6,7,8-tetrahydrofolate + glycine + H2O = (6S)-5,6,7,8-tetrahydrofolate + L-serine. It participates in one-carbon metabolism; tetrahydrofolate interconversion. It functions in the pathway amino-acid biosynthesis; glycine biosynthesis; glycine from L-serine: step 1/1. In terms of biological role, catalyzes the reversible interconversion of serine and glycine with tetrahydrofolate (THF) serving as the one-carbon carrier. This reaction serves as the major source of one-carbon groups required for the biosynthesis of purines, thymidylate, methionine, and other important biomolecules. Also exhibits THF-independent aldolase activity toward beta-hydroxyamino acids, producing glycine and aldehydes, via a retro-aldol mechanism. The polypeptide is Serine hydroxymethyltransferase (Porphyromonas gingivalis (strain ATCC 33277 / DSM 20709 / CIP 103683 / JCM 12257 / NCTC 11834 / 2561)).